The following is a 57-amino-acid chain: MPITCGDIPRLICSVIIPPVGVFFQVGCTKDLAINCLLTVLGYIPGVIHAVYILIKE.

Helical transmembrane passes span 8 to 28 (IPRL…QVGC) and 34 to 54 (INCL…VYIL).

It belongs to the UPF0057 (PMP3) family.

The protein localises to the membrane. The polypeptide is Protein Ric1 (RIC1) (Phytophthora infestans (Potato late blight agent)).